The chain runs to 172 residues: MNHFELFNLPVALDIDLASLKSNFLSLQQQYHPDKAADKDQALIKSSEINQAFKTLSQVDSRAAYLLALKKQDHHLDQSISDFEFLQSALELREQLDEATSSEHLRTLRLEVQQWIDGLVREFKIDYSEEDWAEARDTVRKLRFFQRVLNDIDKAEDQLLDDEDSFDLDDDF.

A J domain is found at 2–69; it reads NHFELFNLPV…DSRAAYLLAL (68 aa).

Belongs to the HscB family. As to quaternary structure, interacts with HscA and stimulates its ATPase activity.

Functionally, co-chaperone involved in the maturation of iron-sulfur cluster-containing proteins. Seems to help targeting proteins to be folded toward HscA. The sequence is that of Co-chaperone protein HscB homolog from Acinetobacter baumannii (strain AB307-0294).